A 520-amino-acid polypeptide reads, in one-letter code: Amine oxidase [flavin-containing] B (520 aa).

Ser2 carries the post-translational modification N-acetylserine. At Ser2–Val489 the chain is on the cytoplasmic side. Lys52 bears the N6-acetyllysine mark. Cys397 carries the post-translational modification S-8alpha-FAD cysteine. Residues Pro490–Leu516 form a helical; Anchor for type IV membrane protein membrane-spanning segment. Residues Leu517–Val520 are Mitochondrial intermembrane-facing.

Monomer, homo- or heterodimer (containing two subunits of similar size). Each subunit contains a covalently bound flavin. Enzymatically active as monomer. It depends on FAD as a cofactor.

Its subcellular location is the mitochondrion outer membrane. It catalyses the reaction a secondary aliphatic amine + O2 + H2O = a primary amine + an aldehyde + H2O2. It carries out the reaction (R)-adrenaline + O2 + H2O = (R)-3,4-dihydroxymandelaldehyde + methylamine + H2O2. The enzyme catalyses a primary methyl amine + O2 + H2O = an aldehyde + H2O2 + NH4(+). The catalysed reaction is benzylamine + O2 + H2O = benzaldehyde + H2O2 + NH4(+). It catalyses the reaction dopamine + O2 + H2O = 3,4-dihydroxyphenylacetaldehyde + H2O2 + NH4(+). It carries out the reaction tyramine + O2 + H2O = (4-hydroxyphenyl)acetaldehyde + H2O2 + NH4(+). The enzyme catalyses (R)-noradrenaline + O2 + H2O = (R)-3,4-dihydroxymandelaldehyde + H2O2 + NH4(+). The catalysed reaction is 2-phenylethylamine + O2 + H2O = 2-phenylacetaldehyde + H2O2 + NH4(+). It catalyses the reaction N-acetylputrescine + O2 + H2O = 4-acetamidobutanal + H2O2 + NH4(+). Its activity is regulated as follows. Inhibited by deprenyl. Its function is as follows. Catalyzes the oxidative deamination of primary and some secondary amines such as neurotransmitters, and exogenous amines including the tertiary amine, neurotoxin 1-methyl-4-phenyl-1,2,3,6-tetrahydropyridine (MPTP), with concomitant reduction of oxygen to hydrogen peroxide and participates in the metabolism of neuroactive and vasoactive amines in the central nervous system and peripheral tissues. Preferentially degrades benzylamine and phenylethylamine. The sequence is that of Amine oxidase [flavin-containing] B from Homo sapiens (Human).